Consider the following 337-residue polypeptide: Endochitinase 37 (337 aa).

The N-terminal stretch at 1–25 (MTRLLDASFLLLPVIASTLFGTASA) is a signal peptide. The region spanning 38–337 (KVLQGYWENW…GSKNWTFGDN (300 aa)) is the GH18 domain. Residue glutamate 160 is the Proton donor of the active site. Asparagine 331 is a glycosylation site (N-linked (GlcNAc...) asparagine).

This sequence belongs to the glycosyl hydrolase 18 family. Chitinase class V subfamily. As to quaternary structure, monomer.

It is found in the secreted. It carries out the reaction Random endo-hydrolysis of N-acetyl-beta-D-glucosaminide (1-&gt;4)-beta-linkages in chitin and chitodextrins.. Functionally, secreted chitinase involved in the degradation of chitin, a component of the cell walls of fungi and exoskeletal elements of some animals (including worms and arthropods). Plays a morphogenetic role during apical growth, cell division and differentiation (cell wall morphogenesis). May be involved in the degradation and further assimilation of phytopathogenic fungi, namely mycoparasitism, the major mechanism accounting for the antagonistic activity against phytopathogenic fungi displayed by Trichoderma. The chain is Endochitinase 37 (chit37) from Trichoderma harzianum (Hypocrea lixii).